Consider the following 433-residue polypeptide: Glutamate-1-semialdehyde 2,1-aminomutase (433 aa).

The residue at position 273 (Lys-273) is an N6-(pyridoxal phosphate)lysine.

Belongs to the class-III pyridoxal-phosphate-dependent aminotransferase family. HemL subfamily. As to quaternary structure, homodimer. Requires pyridoxal 5'-phosphate as cofactor.

It is found in the cytoplasm. The catalysed reaction is (S)-4-amino-5-oxopentanoate = 5-aminolevulinate. It participates in porphyrin-containing compound metabolism; protoporphyrin-IX biosynthesis; 5-aminolevulinate from L-glutamyl-tRNA(Glu): step 2/2. The sequence is that of Glutamate-1-semialdehyde 2,1-aminomutase from Ralstonia pickettii (strain 12J).